The chain runs to 313 residues: Aspartate carbamoyltransferase catalytic subunit (313 aa).

The carbamoyl phosphate site is built by Arg55 and Thr56. Lys83 contributes to the L-aspartate binding site. Carbamoyl phosphate-binding residues include Arg105, His138, and Gln141. Arg171 and Arg225 together coordinate L-aspartate. Residues Gly266 and Pro267 each coordinate carbamoyl phosphate.

This sequence belongs to the aspartate/ornithine carbamoyltransferase superfamily. ATCase family. As to quaternary structure, heterododecamer (2C3:3R2) of six catalytic PyrB chains organized as two trimers (C3), and six regulatory PyrI chains organized as three dimers (R2).

It catalyses the reaction carbamoyl phosphate + L-aspartate = N-carbamoyl-L-aspartate + phosphate + H(+). Its pathway is pyrimidine metabolism; UMP biosynthesis via de novo pathway; (S)-dihydroorotate from bicarbonate: step 2/3. Functionally, catalyzes the condensation of carbamoyl phosphate and aspartate to form carbamoyl aspartate and inorganic phosphate, the committed step in the de novo pyrimidine nucleotide biosynthesis pathway. This Corynebacterium diphtheriae (strain ATCC 700971 / NCTC 13129 / Biotype gravis) protein is Aspartate carbamoyltransferase catalytic subunit.